Reading from the N-terminus, the 286-residue chain is ATP synthase gamma chain (286 aa).

It belongs to the ATPase gamma chain family. In terms of assembly, F-type ATPases have 2 components, CF(1) - the catalytic core - and CF(0) - the membrane proton channel. CF(1) has five subunits: alpha(3), beta(3), gamma(1), delta(1), epsilon(1). CF(0) has three main subunits: a, b and c.

The protein resides in the cell inner membrane. Functionally, produces ATP from ADP in the presence of a proton gradient across the membrane. The gamma chain is believed to be important in regulating ATPase activity and the flow of protons through the CF(0) complex. The chain is ATP synthase gamma chain from Pseudomonas entomophila (strain L48).